The primary structure comprises 147 residues: Protein archease (147 aa).

Positions 17, 146, and 147 each coordinate Ca(2+).

The protein belongs to the archease family.

Activates the tRNA-splicing ligase complex by facilitating the enzymatic turnover of catalytic subunit RtcB. Acts by promoting the guanylylation of RtcB, a key intermediate step in tRNA ligation. Can also alter the NTP specificity of RtcB such that ATP, dGTP or ITP is used efficiently. The chain is Protein archease from Pyrobaculum islandicum (strain DSM 4184 / JCM 9189 / GEO3).